Here is a 943-residue protein sequence, read N- to C-terminus: Translation initiation factor IF-2 (943 aa).

Residues 46 to 359 form a disordered region; it reads IKGMLSKQSA…MPQRKERPLP (314 aa). The segment covering 57 to 76 has biased composition (low complexity); sequence KAPSSQAAKTPAKAAKTSSA. 2 stretches are compositionally biased toward basic and acidic residues: residues 92–103 and 110–124; these read SNDHADVAEHSQ and AKQENKPARSNKTSD. A compositionally biased stretch (polar residues) spans 130-141; sequence SKSTILRPRSTQ. The segment covering 142–190 has biased composition (low complexity); it reads TAHTNTNHNRGGNTASANNTANGRNSNRSNNNNNNRSANNANRSGNNNR. Basic and acidic residues-rich tracts occupy residues 191–205, 239–250, and 259–271; these read SNERNRNDRNRRFDN, ASERQQPKRQEA, and KRSEQPRTERPRT. Composition is skewed to low complexity over residues 289–299 and 315–330; these read PAAAAPKPASA and NFGRSNSYGNRNGFNR. Positions 331–342 are enriched in basic residues; sequence NNRRNKKNKRRQ. Positions 346 to 358 are enriched in basic and acidic residues; it reads PKKEMPQRKERPL. In terms of domain architecture, tr-type G spans 444 to 613; it reads PRPPVVTIMG…LLEADVLELK (170 aa). Positions 453-460 are G1; it reads GHVDHGKT. GTP is bound at residue 453 to 460; sequence GHVDHGKT. The interval 478–482 is G2; it reads GITQH. The tract at residues 499–502 is G3; that stretch reads DTPG. Residues 499–503 and 553–556 contribute to the GTP site; these read DTPGH and NKID. The interval 553–556 is G4; the sequence is NKID. The segment at 589–591 is G5; the sequence is SAK.

It belongs to the TRAFAC class translation factor GTPase superfamily. Classic translation factor GTPase family. IF-2 subfamily.

The protein resides in the cytoplasm. Functionally, one of the essential components for the initiation of protein synthesis. Protects formylmethionyl-tRNA from spontaneous hydrolysis and promotes its binding to the 30S ribosomal subunits. Also involved in the hydrolysis of GTP during the formation of the 70S ribosomal complex. The polypeptide is Translation initiation factor IF-2 (Lacticaseibacillus casei (strain BL23) (Lactobacillus casei)).